The primary structure comprises 264 residues: MSFTVLIPARLGSSRLPDKPLADIAGLPMVVHVARRALASGAAVVVVAADDTRTVEACARHGVRALLTRRDHATGSDRLAEACDLLALPDSEIVVNVQGDEPLIDPALIDACARLLAERPECVMGTAAHAIDTVAEFENPNVVKVVCDALGRALSFSRAPMPWWRDGYAAGLRQATALSDPPPLRHIGLYAYRAGFLRRYPKLAPSPIETIESLEQLRVLWHGERIAVHVSPLRPGPGVDTPDDLARVRALLHDTGQEPPRESG.

It belongs to the KdsB family.

It is found in the cytoplasm. It carries out the reaction 3-deoxy-alpha-D-manno-oct-2-ulosonate + CTP = CMP-3-deoxy-beta-D-manno-octulosonate + diphosphate. It participates in nucleotide-sugar biosynthesis; CMP-3-deoxy-D-manno-octulosonate biosynthesis; CMP-3-deoxy-D-manno-octulosonate from 3-deoxy-D-manno-octulosonate and CTP: step 1/1. Its pathway is bacterial outer membrane biogenesis; lipopolysaccharide biosynthesis. Activates KDO (a required 8-carbon sugar) for incorporation into bacterial lipopolysaccharide in Gram-negative bacteria. The protein is 3-deoxy-manno-octulosonate cytidylyltransferase of Methylibium petroleiphilum (strain ATCC BAA-1232 / LMG 22953 / PM1).